Consider the following 319-residue polypeptide: tRNA uridine(34) hydroxylase (319 aa).

The region spanning 127-221 is the Rhodanese domain; it reads KQEDTVIIDA…YGKDPEVQGE (95 aa). The active-site Cysteine persulfide intermediate is the Cys181.

The protein belongs to the TrhO family.

The enzyme catalyses uridine(34) in tRNA + AH2 + O2 = 5-hydroxyuridine(34) in tRNA + A + H2O. Its function is as follows. Catalyzes oxygen-dependent 5-hydroxyuridine (ho5U) modification at position 34 in tRNAs. The polypeptide is tRNA uridine(34) hydroxylase (Bacillus mycoides (strain KBAB4) (Bacillus weihenstephanensis)).